The primary structure comprises 352 residues: MSVAGLKKQFHKATQKVSEKVGGAEGTKLDDDFKEMERKVDVTSRAVMEIMTKTIEYLQPNPASRAKLSMINTMSKIRGQEKGPGYPQAEALLAEAMLKFGRELGDDCNFGPALGEVGEAMRELSEVKDSLDIEVKQNFIDPLQNLHDKDLREIQHHLKKLEGRRLDFDYKKKRQGKIPDEELRQALEKFDESKEIAESSMFNLLEMDIEQVSQLSALVQAQLEYHKQAVQILQQVTVRLEERIRQASSQPRREYQPKPRMSLEFPTGDSTQPNGGLSHTGTPKPSGVQMDQPCCRALYDFEPENEGELGFKEGDIITLTNQIDENWYEGMLHGHSGFFPINYVEILVALPH.

The interval 1 to 21 (MSVAGLKKQFHKATQKVSEKV) is membrane-binding amphipathic helix. Positions 1 to 27 (MSVAGLKKQFHKATQKVSEKVGGAEGT) are disordered. Residues 1–125 (MSVAGLKKQF…EVGEAMRELS (125 aa)) form a binds and tubulates liposomes region. Residues 18-249 (SEKVGGAEGT…LEERIRQASS (232 aa)) form the BAR domain. The segment at 60–87 (PNPASRAKLSMINTMSKIRGQEKGPGYP) is required for dimerization upon membrane association. Residues 181-248 (EELRQALEKF…RLEERIRQAS (68 aa)) are a coiled coil. Residues 245 to 257 (RQASSQPRREYQP) are compositionally biased toward basic and acidic residues. Positions 245–289 (RQASSQPRREYQPKPRMSLEFPTGDSTQPNGGLSHTGTPKPSGVQ) are disordered. Residue Ser262 is modified to Phosphoserine. A compositionally biased stretch (polar residues) spans 268 to 283 (GDSTQPNGGLSHTGTP). The SH3 domain maps to 290–349 (MDQPCCRALYDFEPENEGELGFKEGDIITLTNQIDENWYEGMLHGHSGFFPINYVEILVA). Tyr299 is modified (phosphotyrosine).

The protein belongs to the endophilin family. As to quaternary structure, monomer; in cytoplasm. Homodimer; when associated with membranes. Interacts with OPHN1. Interacts with SYNJ1. Interacts with DNM1. Interacts with MAP4K3; the interaction appears to regulate MAP4K3-mediated JNK activation. Interacts with PDCD6IP. Interacts with ATXN2. Interacts with ADAM9 and ADAM15 cytoplasmic tails. Interacts with BIN2. Interacts with TMEM108. Interacts with ADGRB2. In terms of tissue distribution, brain, mostly in frontal cortex. Expressed at high level in fetal cerebellum.

The protein localises to the cytoplasm. It localises to the membrane. It is found in the early endosome. The protein resides in the presynapse. Its function is as follows. Implicated in synaptic vesicle endocytosis. May recruit other proteins to membranes with high curvature. Required for BDNF-dependent dendrite outgrowth. Cooperates with SH3GL2 to mediate BDNF-NTRK2 early endocytic trafficking and signaling from early endosomes. This is Endophilin-A1 (SH3GL2) from Homo sapiens (Human).